Reading from the N-terminus, the 435-residue chain is GTPase Der (435 aa).

EngA-type G domains lie at 4–167 and 175–350; these read PVVA…GDKA and IRFS…ENQT. GTP is bound by residues 10-17, 57-61, 119-122, 181-188, 228-232, and 293-296; these read GRPNVGKS, DTGGI, NKAD, DTAGI, and NKWD. Residues 351–435 form the KH-like domain; the sequence is RRIQSSVLND…PIKILARKRK (85 aa).

Belongs to the TRAFAC class TrmE-Era-EngA-EngB-Septin-like GTPase superfamily. EngA (Der) GTPase family. In terms of assembly, associates with the 50S ribosomal subunit.

In terms of biological role, GTPase that plays an essential role in the late steps of ribosome biogenesis. This is GTPase Der from Lactobacillus johnsonii (strain CNCM I-12250 / La1 / NCC 533).